The chain runs to 475 residues: Protein trichome birefringence-like 6 (475 aa).

Residues 14-34 (VLAFIITIISSAIVFFTFFSS) form a helical; Signal-anchor for type II membrane protein membrane-spanning segment. Residues 211–213 (GDS) carry the GDS motif motif. A DCXHWCLPGXXDXWN motif motif is present at residues 450 to 464 (DCSHWCLPGVPDTWN).

The protein belongs to the PC-esterase family. TBL subfamily.

The protein localises to the membrane. May act as a bridging protein that binds pectin and other cell wall polysaccharides. Probably involved in maintaining esterification of pectins. May be involved in the specific O-acetylation of cell wall polymers. The chain is Protein trichome birefringence-like 6 (TBL6) from Arabidopsis thaliana (Mouse-ear cress).